A 495-amino-acid chain; its full sequence is Mesoderm induction early response protein 1 (495 aa).

Disordered regions lie at residues 1 to 25 (MAEP…FEPS) and 76 to 131 (GSTV…PSFT). Residues 83–94 (GEEEEDEEDMDN) are compositionally biased toward acidic residues. Polar residues predominate over residues 120–130 (QSSNDDPTPSF). Residues 171-269 (KEIMVGSMFQ…EALRRLRFNV (99 aa)) form the ELM2 domain. Positions 274 to 326 (EELSVWTEEECRNFEQGLKAYGKDFHLIQANKVRTRSVGECVAFYYMWKKSER) constitute an SANT domain. Disordered stretches follow at residues 356–397 (DESE…NGVS) and 416–495 (HLNG…HGEV). 2 stretches are compositionally biased toward polar residues: residues 387–397 (TASNNTQNGVS) and 420–440 (PTIS…YNRE). A compositionally biased stretch (basic and acidic residues) spans 462 to 476 (TNERPIKRQRMDSPG). A compositionally biased stretch (polar residues) spans 477-489 (KESTGSSEFSQEV).

The protein resides in the nucleus. Transcriptional repressor regulating the expression of a number of genes. Probably functions through recruitment of histone deacetylases involved in chromatin silencing. The sequence is that of Mesoderm induction early response protein 1 (mier1) from Xenopus laevis (African clawed frog).